The chain runs to 449 residues: Glutamate--tRNA ligase 1 (449 aa).

A 'HIGH' region motif is present at residues P11–N21. Residues P242–R246 carry the 'KMSKS' region motif. K245 is a binding site for ATP.

The protein belongs to the class-I aminoacyl-tRNA synthetase family. Glutamate--tRNA ligase type 1 subfamily. Monomer.

The protein localises to the cytoplasm. The catalysed reaction is tRNA(Glu) + L-glutamate + ATP = L-glutamyl-tRNA(Glu) + AMP + diphosphate. Functionally, catalyzes the attachment of glutamate to tRNA(Glu) in a two-step reaction: glutamate is first activated by ATP to form Glu-AMP and then transferred to the acceptor end of tRNA(Glu). This chain is Glutamate--tRNA ligase 1, found in Parvibaculum lavamentivorans (strain DS-1 / DSM 13023 / NCIMB 13966).